A 253-amino-acid chain; its full sequence is Pimeloyl-[acyl-carrier protein] methyl ester esterase (253 aa).

Substrate-binding positions include W18, 78–79 (SL), and 139–143 (FLALD). S78 functions as the Nucleophile in the catalytic mechanism. Residues D203 and H231 contribute to the active site. Residue H231 participates in substrate binding.

This sequence belongs to the AB hydrolase superfamily. Carboxylesterase BioH family. As to quaternary structure, monomer.

It localises to the cytoplasm. The catalysed reaction is 6-carboxyhexanoyl-[ACP] methyl ester + H2O = 6-carboxyhexanoyl-[ACP] + methanol + H(+). The protein operates within cofactor biosynthesis; biotin biosynthesis. The physiological role of BioH is to remove the methyl group introduced by BioC when the pimeloyl moiety is complete. It allows to synthesize pimeloyl-ACP via the fatty acid synthetic pathway through the hydrolysis of the ester bonds of pimeloyl-ACP esters. In Xanthomonas axonopodis pv. citri (strain 306), this protein is Pimeloyl-[acyl-carrier protein] methyl ester esterase.